The sequence spans 156 residues: Small ribosomal subunit protein uS7A/uS7B (156 aa).

This sequence belongs to the universal ribosomal protein uS7 family. As to quaternary structure, part of the 30S ribosomal subunit. Contacts proteins S9 and S11.

One of the primary rRNA binding proteins, it binds directly to 16S rRNA where it nucleates assembly of the head domain of the 30S subunit. Is located at the subunit interface close to the decoding center, probably blocks exit of the E-site tRNA. The polypeptide is Small ribosomal subunit protein uS7A/uS7B (Cereibacter sphaeroides (strain ATCC 17029 / ATH 2.4.9) (Rhodobacter sphaeroides)).